The chain runs to 358 residues: CCAAT/enhancer-binding protein alpha (358 aa).

A disordered region spans residues 1–55; it reads MESADFYEAEPRPPMSSHLQSPPHAPSNAAFGFPRGAGPAPPPAPPAAPEPLGGI. Residues 1-70 form a required to repress E2F1:TFDP1-mediated transcription, to inhibit cell cycle and to induce adipocyte differentiation region; it reads MESADFYEAE…SIDISAYIDP (70 aa). The segment covering 29 to 38 has biased composition (low complexity); the sequence is AAFGFPRGAG. Positions 39–49 are enriched in pro residues; the sequence is PAPPPAPPAAP. Positions 54–72 are required for interaction with TRIB1; the sequence is GICEHETSIDISAYIDPAA. Positions 126–200 are required to induce adipocyte differentiation; the sequence is PPGYGCAAAG…HASPAHLAAP (75 aa). An N6-acetyllysine; alternate modification is found at lysine 159. Residue lysine 159 forms a Glycyl lysine isopeptide (Lys-Gly) (interchain with G-Cter in SUMO); alternate linkage. Lysine 159 participates in a covalent cross-link: Glycyl lysine isopeptide (Lys-Gly) (interchain with G-Cter in SUMO2); alternate. Disordered regions lie at residues 176–195 and 213–310; these read LFPY…ASPA and TMHL…NVET. Pro residues predominate over residues 179 to 191; that stretch reads YQPPPPPPPPHPH. The tract at residues 180–194 is required to functionally cooperate with SREBF1 in promoter activation; it reads QPPPPPPPPHPHASP. Phosphoserine is present on serine 193. Residues 220 to 234 are compositionally biased toward pro residues; the sequence is HPTPPPTPVPSPHPA. Phosphothreonine; by GSK3 occurs at positions 222 and 226. Serine 230 carries the phosphoserine; by GSK3 modification. Residues 240–358 form an interaction with FOXO1 region; the sequence is AGLPGPGGSL…SLVKAMGNCA (119 aa). A compositionally biased stretch (gly residues) spans 261-271; it reads TGGGGGGGAGA. Residues 276 to 292 show a composition bias toward basic and acidic residues; that stretch reads KSVDKNSNEYRVRRERN. The region spanning 282-345 is the bZIP domain; sequence SNEYRVRRER…DTLRGIFRQL (64 aa). Residues 285–300 mediate DNA binding; it reads YRVRRERNNIAVRKSR. A basic motif region spans residues 286–313; that stretch reads RVRRERNNIAVRKSRDKAKQRNVETQQK. Residues 317 to 345 are leucine-zipper; sequence LTSDNDRLRKRVEQLSRELDTLRGIFRQL.

It belongs to the bZIP family. C/EBP subfamily. In terms of assembly, binds DNA as a homodimer and as a heterodimer. Can form stable heterodimers with CEBPB, CEBPD, CEBPE and CEBPG. Can form stable homodimers (also isoform 2 and isoform 3 dimers) and heterodimers with CEBPB (with isoform 2 and isoform 3) and CEBPG. Interacts with PRDM16. Interacts with UBN1. Interacts with ZNF638; this interaction increases transcriptional activation. Interacts with the complex TFDP2:E2F1; the interaction prevents CEBPA binding to target gene promoters and represses its transcriptional activity. Interacts with RB1. Interacts (when phosphorylated at Ser-193) with CDK2, CDK4, E2F4 and SMARCA2. Interacts with SREBPF1. Interacts with FOXO1 (via the Fork-head domain); the interaction increases when FOXO1 is deacetylated. Interacts with SIX1. Interacts (via recognition sequence) with TRIB1. Interacts with TAF1A and UBTF. As to quaternary structure, interacts with NPM1. Sumoylated, sumoylation blocks the inhibitory effect on cell proliferation by disrupting the interaction with SMARCA2. Post-translationally, phosphorylation at Ser-193 is required for interaction with CDK2, CDK4 and SWI/SNF complex leading to cell cycle inhibition. Dephosphorylated at Ser-193 by protein phosphatase 2A (PP2A) through PI3K/AKT signaling pathway regulation. Phosphorylation at Thr-222 and Thr-226 by GSK3 is constitutive in adipose tissue and lung. In liver, both Thr-222 and Thr-226 are phosphorylated only during feeding but not during fasting. Phosphorylation of the GSK3 consensus sites selectively decreases transactivation activity on IRE-controlled promoters. In terms of processing, ubiquitinated by COP1 upon interaction with TRIB1. In terms of tissue distribution, isoform 2 and isoform 3 are expressed in liver (at protein level).

Its subcellular location is the nucleus. It localises to the nucleolus. Functionally, transcription factor that coordinates proliferation arrest and the differentiation of myeloid progenitors, adipocytes, hepatocytes, and cells of the lung and the placenta. Binds directly to the consensus DNA sequence 5'-T[TG]NNGNAA[TG]-3' acting as an activator on distinct target genes. During early embryogenesis, plays essential and redundant functions with CEBPB. Essential for the transition from common myeloid progenitors (CMP) to granulocyte/monocyte progenitors (GMP). Critical for the proper development of the liver and the lung. Necessary for terminal adipocyte differentiation, is required for postnatal maintenance of systemic energy homeostasis and lipid storage. To regulate these different processes at the proper moment and tissue, interplays with other transcription factors and modulators. Down-regulates the expression of genes that maintain cells in an undifferentiated and proliferative state through E2F1 repression, which is critical for its ability to induce adipocyte and granulocyte terminal differentiation. Reciprocally E2F1 blocks adipocyte differentiation by binding to specific promoters and repressing CEBPA binding to its target gene promoters. Proliferation arrest also depends on a functional binding to SWI/SNF complex. In liver, regulates gluconeogenesis and lipogenesis through different mechanisms. To regulate gluconeogenesis, functionally cooperates with FOXO1 binding to IRE-controlled promoters and regulating the expression of target genes such as PCK1 or G6PC1. To modulate lipogenesis, interacts and transcriptionally synergizes with SREBF1 in promoter activation of specific lipogenic target genes such as ACAS2. In adipose tissue, seems to act as FOXO1 coactivator accessing to ADIPOQ promoter through FOXO1 binding sites. Its function is as follows. Can act as dominant-negative. Binds DNA and have transctivation activity, even if much less efficiently than isoform 2. Does not inhibit cell proliferation. Directly and specifically enhances ribosomal DNA transcription interacting with RNA polymerase I-specific cofactors and inducing histone acetylation. This is CCAAT/enhancer-binding protein alpha from Rattus norvegicus (Rat).